A 227-amino-acid polypeptide reads, in one-letter code: MVITVDGPSGAGKGTLCYALAKKLGFSLLDSGAIYRVTALAALKTQEQGQSAVKLDDEFALAELARKLDIQFLPQNGEVQIFLDGENVSGQIRTQDVADAASKVAVFPAVRSALLQLQQDFAKQGKGLIADGRDMGTVVFPNAQVKLFLDASAEERAKRRYKQLQSKGIDGNFAQILAEIKERDFRDRNRLVAPLKPADDALLLDSTELSIEDVIAQALAYIESKTA.

7-15 (GPSGAGKGT) contacts ATP.

This sequence belongs to the cytidylate kinase family. Type 1 subfamily.

Its subcellular location is the cytoplasm. The enzyme catalyses CMP + ATP = CDP + ADP. It catalyses the reaction dCMP + ATP = dCDP + ADP. The chain is Cytidylate kinase from Actinobacillus succinogenes (strain ATCC 55618 / DSM 22257 / CCUG 43843 / 130Z).